We begin with the raw amino-acid sequence, 223 residues long: Phage shock protein A homolog (223 aa).

The stretch at 29–185 (IDQALRDMRS…AGMEDRNKAM (157 aa)) forms a coiled coil.

The protein belongs to the PspA/Vipp/IM30 family.

This is Phage shock protein A homolog from Deinococcus radiodurans (strain ATCC 13939 / DSM 20539 / JCM 16871 / CCUG 27074 / LMG 4051 / NBRC 15346 / NCIMB 9279 / VKM B-1422 / R1).